A 177-amino-acid chain; its full sequence is MNGGHIQLIIGPMFSGKSTELIRRVRRYQIAQYKCVTIKYSNDNRYGTGLWTHDKNNFEALEATKLCDVLEAITDFSVIGIDEGQFFPDIVEFCERMANEGKIVIVAALDGTFQRKPFNNILDLIPLSEMVVKLTAVCMKCFKEASFSKRLGAETKIEIIGGIDMYQSVCRKCYIDS.

Position 11–18 (11–18 (GPMFSGKS)) interacts with ATP. Glu83 (proton acceptor) is an active-site residue. Phe113 serves as a coordination point for substrate. The Zn(2+) site is built by Cys138 and Cys141. A substrate-binding site is contributed by 157–161 (IEIIG). Residues Cys170 and Cys173 each coordinate Zn(2+).

Belongs to the thymidine kinase family. Homotetramer. Two molecules of substrate bind to each enzyme tetramer.

It catalyses the reaction thymidine + ATP = dTMP + ADP + H(+). Functionally, phosphorylates thymidine and thymidine analogs, such as azidothymidine (AZT). Part of the salvage pathway for pyrimidine deoxyribonucleotide synthesis. This Variola virus protein is Thymidine kinase (OPG101).